A 184-amino-acid chain; its full sequence is ATP synthase subunit b, chloroplastic (184 aa).

Residues 4–24 traverse the membrane as a helical segment; that stretch reads IINLVIFSGYWPIAGNFGLNT.

This sequence belongs to the ATPase B chain family. In terms of assembly, F-type ATPases have 2 components, F(1) - the catalytic core - and F(0) - the membrane proton channel. F(1) has five subunits: alpha(3), beta(3), gamma(1), delta(1), epsilon(1). F(0) has four main subunits: a(1), b(1), b'(1) and c(10-14). The alpha and beta chains form an alternating ring which encloses part of the gamma chain. F(1) is attached to F(0) by a central stalk formed by the gamma and epsilon chains, while a peripheral stalk is formed by the delta, b and b' chains.

It localises to the plastid. The protein localises to the chloroplast thylakoid membrane. F(1)F(0) ATP synthase produces ATP from ADP in the presence of a proton or sodium gradient. F-type ATPases consist of two structural domains, F(1) containing the extramembraneous catalytic core and F(0) containing the membrane proton channel, linked together by a central stalk and a peripheral stalk. During catalysis, ATP synthesis in the catalytic domain of F(1) is coupled via a rotary mechanism of the central stalk subunits to proton translocation. Functionally, component of the F(0) channel, it forms part of the peripheral stalk, linking F(1) to F(0). This Physcomitrium patens (Spreading-leaved earth moss) protein is ATP synthase subunit b, chloroplastic.